The following is a 540-amino-acid chain: Chaperonin GroEL (540 aa).

Residues 30 to 33 (TLGP), Lys-51, 87 to 91 (DGTTT), Gly-415, 479 to 481 (NAA), and Asp-495 contribute to the ATP site.

The protein belongs to the chaperonin (HSP60) family. Forms a cylinder of 14 subunits composed of two heptameric rings stacked back-to-back. Interacts with the co-chaperonin GroES.

The protein localises to the cytoplasm. It catalyses the reaction ATP + H2O + a folded polypeptide = ADP + phosphate + an unfolded polypeptide.. Its function is as follows. Together with its co-chaperonin GroES, plays an essential role in assisting protein folding. The GroEL-GroES system forms a nano-cage that allows encapsulation of the non-native substrate proteins and provides a physical environment optimized to promote and accelerate protein folding. This chain is Chaperonin GroEL, found in Raoultella planticola (Klebsiella planticola).